The chain runs to 287 residues: Glycine--tRNA ligase alpha subunit (287 aa).

This sequence belongs to the class-II aminoacyl-tRNA synthetase family. Tetramer of two alpha and two beta subunits.

The protein resides in the cytoplasm. It catalyses the reaction tRNA(Gly) + glycine + ATP = glycyl-tRNA(Gly) + AMP + diphosphate. The chain is Glycine--tRNA ligase alpha subunit from Campylobacter jejuni (strain RM1221).